The sequence spans 1037 residues: Ephrin type-A receptor 5 (1037 aa).

The signal sequence occupies residues 1–24; it reads MRGSGPRGAGRRRPPSGGGDTPIT. Positions 1-24 are disordered; the sequence is MRGSGPRGAGRRRPPSGGGDTPIT. Residues 25-573 lie on the Extracellular side of the membrane; that stretch reads PASLAGCYSA…AASSDQSQIP (549 aa). In terms of domain architecture, Eph LBD spans 60–238; that stretch reads EVNLLDSRTV…YYKKCPSVVR (179 aa). N-linked (GlcNAc...) asparagine glycosylation is found at asparagine 264, asparagine 299, asparagine 369, asparagine 423, asparagine 436, and asparagine 461. Fibronectin type-III domains follow at residues 357-467 and 468-562; these read PPSA…TNQA and APSP…TTPV. The chain crosses the membrane as a helical span at residues 574–594; the sequence is VIAVSVTVGVILLAVVIGVLL. At 595–1037 the chain is on the cytoplasmic side; sequence SGSCCECGCG…VQLVNGMVPL (443 aa). Phosphotyrosine; by autocatalysis is present on residues tyrosine 650 and tyrosine 656. A Protein kinase domain is found at 675-936; sequence ITIERVIGAG…EIVNMLDKLI (262 aa). ATP-binding positions include 681–689 and lysine 707; that span reads IGAGEFGEV. Residue aspartate 800 is the Proton acceptor of the active site. Tyrosine 833 and tyrosine 982 each carry phosphotyrosine; by autocatalysis. Positions 965-1029 constitute an SAM domain; that stretch reads GAYRSVGEWL…MNSLQEMKVQ (65 aa). The PDZ-binding motif lies at 1035-1037; that stretch reads VPL.

The protein belongs to the protein kinase superfamily. Tyr protein kinase family. Ephrin receptor subfamily. As to quaternary structure, heterotetramer upon binding of the ligand. The heterotetramer is composed of an ephrin dimer and a receptor dimer. Oligomerization is probably required to induce biological responses. Interacts (via SAM domain) with SAMD5 (via SAM domain). Post-translationally, phosphorylated. Phosphorylation is stimulated by the ligand EFNA5. Dephosphorylation upon stimulation by glucose, inhibits EPHA5 forward signaling and results in insulin secretion. In terms of tissue distribution, almost exclusively expressed in the nervous system in cortical neurons, cerebellar Purkinje cells and pyramidal neurons within the cortex and hippocampus. Display an increasing gradient of expression from the forebrain to hindbrain and spinal cord.

It is found in the cell membrane. The protein localises to the cell projection. It localises to the axon. Its subcellular location is the dendrite. The catalysed reaction is L-tyrosyl-[protein] + ATP = O-phospho-L-tyrosyl-[protein] + ADP + H(+). Receptor tyrosine kinase which binds promiscuously GPI-anchored ephrin-A family ligands residing on adjacent cells, leading to contact-dependent bidirectional signaling into neighboring cells. The signaling pathway downstream of the receptor is referred to as forward signaling while the signaling pathway downstream of the ephrin ligand is referred to as reverse signaling. Among GPI-anchored ephrin-A ligands, EFNA5 most probably constitutes the cognate/functional ligand for EPHA5. Functions as an axon guidance molecule during development and may be involved in the development of the retinotectal, entorhino-hippocampal and hippocamposeptal pathways. Together with EFNA5 plays also a role in synaptic plasticity in adult brain through regulation of synaptogenesis. In addition to its function in the nervous system, the interaction of EPHA5 with EFNA5 mediates communication between pancreatic islet cells to regulate glucose-stimulated insulin secretion. The polypeptide is Ephrin type-A receptor 5 (EPHA5) (Homo sapiens (Human)).